The primary structure comprises 289 residues: NADPH-dependent 7-cyano-7-deazaguanine reductase (289 aa).

Residue 81–83 coordinates substrate; sequence IES. An NADPH-binding site is contributed by 83–84; the sequence is SK. The active-site Thioimide intermediate is the cysteine 196. The active-site Proton donor is the aspartate 203. Substrate is bound at residue 235-236; the sequence is HE. NADPH is bound at residue 264-265; it reads RG.

The protein belongs to the GTP cyclohydrolase I family. QueF type 2 subfamily. In terms of assembly, homodimer.

Its subcellular location is the cytoplasm. The catalysed reaction is 7-aminomethyl-7-carbaguanine + 2 NADP(+) = 7-cyano-7-deazaguanine + 2 NADPH + 3 H(+). It participates in tRNA modification; tRNA-queuosine biosynthesis. Its function is as follows. Catalyzes the NADPH-dependent reduction of 7-cyano-7-deazaguanine (preQ0) to 7-aminomethyl-7-deazaguanine (preQ1). This is NADPH-dependent 7-cyano-7-deazaguanine reductase from Albidiferax ferrireducens (strain ATCC BAA-621 / DSM 15236 / T118) (Rhodoferax ferrireducens).